A 1375-amino-acid chain; its full sequence is DNA-directed RNA polymerase subunit beta' (1375 aa).

The segment at Met1–Arg158 is unknown. The segment at Lys159–Ile1353 is DNA-directed RNA polymerase subunit beta'. Positions 219, 221, 233, and 236 each coordinate Zn(2+). Mg(2+)-binding residues include Asp607, Asp609, and Asp611.

This sequence belongs to the RNA polymerase beta' chain family. As to quaternary structure, the RNAP catalytic core consists of 2 alpha, 1 beta, 1 beta' and 1 omega subunit. When a sigma factor is associated with the core the holoenzyme is formed, which can initiate transcription. It depends on Mg(2+) as a cofactor. Zn(2+) is required as a cofactor.

The catalysed reaction is RNA(n) + a ribonucleoside 5'-triphosphate = RNA(n+1) + diphosphate. Functionally, DNA-dependent RNA polymerase catalyzes the transcription of DNA into RNA using the four ribonucleoside triphosphates as substrates. The chain is DNA-directed RNA polymerase subunit beta' from Acholeplasma laidlawii (strain PG-8A).